The following is a 343-amino-acid chain: GTPase Obg (343 aa).

The Obg domain maps to 1–158 (MFIDEAKIRV…FTLRLELKVL (158 aa)). The tract at residues 121 to 140 (RGGRGNQHFATSTHQAPREH) is disordered. Residues 159–333 (ADIGIVGYPN…LKYAMAERVR (175 aa)) enclose the OBG-type G domain. GTP-binding positions include 165–172 (GYPNVGKS), 190–194 (FTTLE), 215–218 (DIPG), 286–289 (SKID), and 314–316 (SAV). Residues S172 and T192 each contribute to the Mg(2+) site.

Belongs to the TRAFAC class OBG-HflX-like GTPase superfamily. OBG GTPase family. As to quaternary structure, monomer. It depends on Mg(2+) as a cofactor.

It is found in the cytoplasm. Its function is as follows. An essential GTPase which binds GTP, GDP and possibly (p)ppGpp with moderate affinity, with high nucleotide exchange rates and a fairly low GTP hydrolysis rate. Plays a role in control of the cell cycle, stress response, ribosome biogenesis and in those bacteria that undergo differentiation, in morphogenesis control. This is GTPase Obg from Acidobacterium capsulatum (strain ATCC 51196 / DSM 11244 / BCRC 80197 / JCM 7670 / NBRC 15755 / NCIMB 13165 / 161).